We begin with the raw amino-acid sequence, 449 residues long: UDP-N-acetylmuramoylalanine--D-glutamate ligase (449 aa).

113–119 contacts ATP; that stretch reads GTNGKTT.

It belongs to the MurCDEF family.

Its subcellular location is the cytoplasm. It carries out the reaction UDP-N-acetyl-alpha-D-muramoyl-L-alanine + D-glutamate + ATP = UDP-N-acetyl-alpha-D-muramoyl-L-alanyl-D-glutamate + ADP + phosphate + H(+). It functions in the pathway cell wall biogenesis; peptidoglycan biosynthesis. In terms of biological role, cell wall formation. Catalyzes the addition of glutamate to the nucleotide precursor UDP-N-acetylmuramoyl-L-alanine (UMA). This chain is UDP-N-acetylmuramoylalanine--D-glutamate ligase, found in Gloeothece citriformis (strain PCC 7424) (Cyanothece sp. (strain PCC 7424)).